Here is a 151-residue protein sequence, read N- to C-terminus: Globin CTT-IIIA (151 aa).

Residues 8–147 enclose the Globin domain; sequence SMTDAQVAAV…MFHVIFNALD (140 aa). Residue His-98 participates in heme b binding.

Belongs to the globin family. As to quaternary structure, monomer.

This is Globin CTT-IIIA from Chironomus thummi thummi (Midge).